Here is a 768-residue protein sequence, read N- to C-terminus: Telomere repeats-binding bouquet formation protein 1 (768 aa).

ARM repeat units lie at residues E101–G145 and N341–S384. Residues E399–N448 adopt a coiled-coil conformation. Basic and acidic residues-rich tracts occupy residues G422–D436 and R461–S475. Disordered stretches follow at residues G422–M441 and A454–S475. Residues Q524–P700 form an interaction with TERF1 region. T648 is modified (phosphothreonine). Positions K707–I760 constitute a Myb-like domain.

It belongs to the TERB1 family. Component of the MAJIN-TERB1-TERB2 complex, composed of MAJIN, TERB1 and TERB2. Interacts with TERF1, STAG3 and SUN1. Interacts (via Myb-like domain) with the cohesin complex; probably mediated via interaction with STAG3. Post-translationally, phosphorylated by CDK. Phosphorylation by CDK takes place in late prophase when the cap exchange is prominent. is important for the stabilization of telomere attachment but dispenable for the cap exchange. Expressed in testis and fetal oocytes.

It is found in the chromosome. Its subcellular location is the telomere. The protein resides in the nucleus inner membrane. Meiosis-specific telomere-associated protein involved in meiotic telomere attachment to the nucleus inner membrane, a crucial step for homologous pairing and synapsis. Component of the MAJIN-TERB1-TERB2 complex, which promotes telomere cap exchange by mediating attachment of telomeric DNA to the inner nuclear membrane and replacement of the protective cap of telomeric chromosomes: in early meiosis, the MAJIN-TERB1-TERB2 complex associates with telomeric DNA and the shelterin/telosome complex. During prophase, the complex matures and promotes release of the shelterin/telosome complex from telomeric DNA. In the MAJIN-TERB1-TERB2 complex, TERB1 probably mediates association with the shelterin/telosome complex via interaction with TERF1, promoting priming telomeric DNA attachment'. Promotes telomere association with the nuclear envelope and deposition of the SUN-KASH/LINC complex. Also recruits cohesin to telomeres to develop structural rigidity. The chain is Telomere repeats-binding bouquet formation protein 1 from Mus musculus (Mouse).